A 232-amino-acid chain; its full sequence is Ribonuclease P protein component 3 (232 aa).

It belongs to the eukaryotic/archaeal RNase P protein component 3 family. As to quaternary structure, consists of a catalytic RNA component and at least 4-5 protein subunits. Forms a subcomplex with Rnp2 which stimulates the catalytic RNA.

It localises to the cytoplasm. The enzyme catalyses Endonucleolytic cleavage of RNA, removing 5'-extranucleotides from tRNA precursor.. Its function is as follows. Part of ribonuclease P, a protein complex that generates mature tRNA molecules by cleaving their 5'-ends. The polypeptide is Ribonuclease P protein component 3 (Methanocaldococcus jannaschii (strain ATCC 43067 / DSM 2661 / JAL-1 / JCM 10045 / NBRC 100440) (Methanococcus jannaschii)).